Here is a 545-residue protein sequence, read N- to C-terminus: CTP synthase (545 aa).

An amidoligase domain region spans residues 1–266 (MKTKFIFITG…DQKIAIMLKL (266 aa)). Ser14 serves as a coordination point for CTP. Ser14 contacts UTP. Residues 15–20 (SLGKGL) and Asp72 contribute to the ATP site. Residues Asp72 and Glu140 each coordinate Mg(2+). CTP contacts are provided by residues 147 to 149 (DIE), 187 to 192 (KTKPTQ), and Lys223. Residues 187–192 (KTKPTQ) and Lys223 contribute to the UTP site. Positions 291–545 (TIGIVGKYVD…IKASCENKNK (255 aa)) constitute a Glutamine amidotransferase type-1 domain. L-glutamine is bound at residue Gly353. Residue Cys380 is the Nucleophile; for glutamine hydrolysis of the active site. L-glutamine contacts are provided by residues 381–384 (LGMQ), Glu404, and Arg472. Catalysis depends on residues His518 and Glu520.

This sequence belongs to the CTP synthase family. In terms of assembly, homotetramer.

It carries out the reaction UTP + L-glutamine + ATP + H2O = CTP + L-glutamate + ADP + phosphate + 2 H(+). The enzyme catalyses L-glutamine + H2O = L-glutamate + NH4(+). The catalysed reaction is UTP + NH4(+) + ATP = CTP + ADP + phosphate + 2 H(+). Its pathway is pyrimidine metabolism; CTP biosynthesis via de novo pathway; CTP from UDP: step 2/2. With respect to regulation, allosterically activated by GTP, when glutamine is the substrate; GTP has no effect on the reaction when ammonia is the substrate. The allosteric effector GTP functions by stabilizing the protein conformation that binds the tetrahedral intermediate(s) formed during glutamine hydrolysis. Inhibited by the product CTP, via allosteric rather than competitive inhibition. In terms of biological role, catalyzes the ATP-dependent amination of UTP to CTP with either L-glutamine or ammonia as the source of nitrogen. Regulates intracellular CTP levels through interactions with the four ribonucleotide triphosphates. This is CTP synthase from Maridesulfovibrio salexigens (strain ATCC 14822 / DSM 2638 / NCIMB 8403 / VKM B-1763) (Desulfovibrio salexigens).